The sequence spans 196 residues: Imidazoleglycerol-phosphate dehydratase (196 aa).

It belongs to the imidazoleglycerol-phosphate dehydratase family.

It is found in the cytoplasm. It carries out the reaction D-erythro-1-(imidazol-4-yl)glycerol 3-phosphate = 3-(imidazol-4-yl)-2-oxopropyl phosphate + H2O. It functions in the pathway amino-acid biosynthesis; L-histidine biosynthesis; L-histidine from 5-phospho-alpha-D-ribose 1-diphosphate: step 6/9. In Caulobacter vibrioides (strain ATCC 19089 / CIP 103742 / CB 15) (Caulobacter crescentus), this protein is Imidazoleglycerol-phosphate dehydratase.